The chain runs to 235 residues: Carboxy-S-adenosyl-L-methionine synthase (235 aa).

Residues Tyr35, 60–62 (GCS), 83–84 (DN), Asn124, and Arg191 contribute to the S-adenosyl-L-methionine site.

This sequence belongs to the class I-like SAM-binding methyltransferase superfamily. Cx-SAM synthase family. In terms of assembly, homodimer.

It carries out the reaction prephenate + S-adenosyl-L-methionine = carboxy-S-adenosyl-L-methionine + 3-phenylpyruvate + H2O. Its function is as follows. Catalyzes the conversion of S-adenosyl-L-methionine (SAM) to carboxy-S-adenosyl-L-methionine (Cx-SAM). This Campylobacter jejuni subsp. jejuni serotype O:23/36 (strain 81-176) protein is Carboxy-S-adenosyl-L-methionine synthase.